Consider the following 156-residue polypeptide: MNLNATLIGQLIAFAIFVAFCMKFVWPPIIKAIEERQRSIANALASAEAARKEQADTKALVEQEITEAKMQAQQIIDLANKRRNEILEEVKVEAEATKAKIIEQGYAEVEAERKRVQEELRVKVASLAIAGAEKIVGRTVDEAANSDIIDKLVAEL.

The chain crosses the membrane as a helical span at residues 7 to 27 (LIGQLIAFAIFVAFCMKFVWP).

Belongs to the ATPase B chain family. As to quaternary structure, F-type ATPases have 2 components, F(1) - the catalytic core - and F(0) - the membrane proton channel. F(1) has five subunits: alpha(3), beta(3), gamma(1), delta(1), epsilon(1). F(0) has three main subunits: a(1), b(2) and c(10-14). The alpha and beta chains form an alternating ring which encloses part of the gamma chain. F(1) is attached to F(0) by a central stalk formed by the gamma and epsilon chains, while a peripheral stalk is formed by the delta and b chains.

The protein localises to the cell inner membrane. F(1)F(0) ATP synthase produces ATP from ADP in the presence of a proton or sodium gradient. F-type ATPases consist of two structural domains, F(1) containing the extramembraneous catalytic core and F(0) containing the membrane proton channel, linked together by a central stalk and a peripheral stalk. During catalysis, ATP synthesis in the catalytic domain of F(1) is coupled via a rotary mechanism of the central stalk subunits to proton translocation. In terms of biological role, component of the F(0) channel, it forms part of the peripheral stalk, linking F(1) to F(0). The sequence is that of ATP synthase subunit b from Pasteurella multocida (strain Pm70).